Here is a 1949-residue protein sequence, read N- to C-terminus: Protein GREB1 (1949 aa).

Disordered regions lie at residues 52 to 77 (EGGSRVDNEEEEEEGEGGLETNGPPN), 302 to 334 (ILSNSGPPKKRHKGWSPESPSAPDGGCPQGGGN), and 1085 to 1210 (EALE…GQRS). Positions 59–68 (NEEEEEEGEG) are enriched in acidic residues. Composition is skewed to basic and acidic residues over residues 1085–1095 (EALESDAEKLS) and 1110–1126 (TSEKRSPMKRERSRSHD). The span at 1127 to 1147 (SASSSLSSKASGSALGGESSA) shows a compositional bias: low complexity. Over residues 1166–1178 (PAEEGRAPGEKQR) the composition is skewed to basic and acidic residues. The helical transmembrane segment at 1868–1888 (DLLFSGLLLYLCDSFVGASFL) threads the bilayer.

Belongs to the GREB1 family. Expressed in proliferating prostatic tissue and prostate cancer.

It is found in the membrane. Functionally, may play a role in estrogen-stimulated cell proliferation. Acts as a regulator of hormone-dependent cancer growth in breast and prostate cancers. The chain is Protein GREB1 (GREB1) from Homo sapiens (Human).